The primary structure comprises 195 residues: NADH-quinone oxidoreductase subunit B (195 aa).

Positions 74, 75, 139, and 169 each coordinate [4Fe-4S] cluster.

Belongs to the complex I 20 kDa subunit family. In terms of assembly, NDH-1 is composed of 14 different subunits. Subunits NuoB, C, D, E, F, and G constitute the peripheral sector of the complex. Requires [4Fe-4S] cluster as cofactor.

It localises to the cell inner membrane. It catalyses the reaction a quinone + NADH + 5 H(+)(in) = a quinol + NAD(+) + 4 H(+)(out). In terms of biological role, NDH-1 shuttles electrons from NADH, via FMN and iron-sulfur (Fe-S) centers, to quinones in the respiratory chain. The immediate electron acceptor for the enzyme in this species is believed to be ubiquinone. Couples the redox reaction to proton translocation (for every two electrons transferred, four hydrogen ions are translocated across the cytoplasmic membrane), and thus conserves the redox energy in a proton gradient. The polypeptide is NADH-quinone oxidoreductase subunit B (Methylobacterium radiotolerans (strain ATCC 27329 / DSM 1819 / JCM 2831 / NBRC 15690 / NCIMB 10815 / 0-1)).